We begin with the raw amino-acid sequence, 247 residues long: 2,3-bisphosphoglycerate-dependent phosphoglycerate mutase (247 aa).

Residues 9 to 16 (RHGESEWN), 22 to 23 (TG), R61, 88 to 91 (ERHY), K99, 115 to 116 (RR), and 183 to 184 (GN) each bind substrate. The active-site Tele-phosphohistidine intermediate is the H10. Residue E88 is the Proton donor/acceptor of the active site.

The protein belongs to the phosphoglycerate mutase family. BPG-dependent PGAM subfamily.

It catalyses the reaction (2R)-2-phosphoglycerate = (2R)-3-phosphoglycerate. It participates in carbohydrate degradation; glycolysis; pyruvate from D-glyceraldehyde 3-phosphate: step 3/5. In terms of biological role, catalyzes the interconversion of 2-phosphoglycerate and 3-phosphoglycerate. This is 2,3-bisphosphoglycerate-dependent phosphoglycerate mutase from Nocardioides sp. (strain ATCC BAA-499 / JS614).